Reading from the N-terminus, the 292-residue chain is Shikimate dehydrogenase (NADP(+)) (292 aa).

Shikimate is bound by residues 22–24 (SLS) and Ser-69. The Proton acceptor role is filled by Lys-73. 2 residues coordinate shikimate: Asn-94 and Asp-111. Residues 135 to 139 (GVGGA) and Ile-236 contribute to the NADP(+) site. Position 238 (Tyr-238) interacts with shikimate. An NADP(+)-binding site is contributed by Gly-260.

It belongs to the shikimate dehydrogenase family. Homodimer.

The enzyme catalyses shikimate + NADP(+) = 3-dehydroshikimate + NADPH + H(+). It functions in the pathway metabolic intermediate biosynthesis; chorismate biosynthesis; chorismate from D-erythrose 4-phosphate and phosphoenolpyruvate: step 4/7. Functionally, involved in the biosynthesis of the chorismate, which leads to the biosynthesis of aromatic amino acids. Catalyzes the reversible NADPH linked reduction of 3-dehydroshikimate (DHSA) to yield shikimate (SA). This is Shikimate dehydrogenase (NADP(+)) from Streptococcus pyogenes serotype M2 (strain MGAS10270).